Here is a 459-residue protein sequence, read N- to C-terminus: tRNA modification GTPase MnmE (459 aa).

(6S)-5-formyl-5,6,7,8-tetrahydrofolate contacts are provided by Arg22, Glu85, and Arg124. The region spanning 221 to 380 (GLSTVIVGKP…LEIQIRDLFF (160 aa)) is the TrmE-type G domain. Position 231 (Asn231) interacts with K(+). GTP contacts are provided by residues 231-236 (NVGKSS), 250-256 (TEVAGTT), and 275-278 (DTAG). Residue Ser235 coordinates Mg(2+). The K(+) site is built by Thr250, Val252, and Thr255. Thr256 contributes to the Mg(2+) binding site. (6S)-5-formyl-5,6,7,8-tetrahydrofolate is bound at residue Lys459.

The protein belongs to the TRAFAC class TrmE-Era-EngA-EngB-Septin-like GTPase superfamily. TrmE GTPase family. Homodimer. Heterotetramer of two MnmE and two MnmG subunits. K(+) is required as a cofactor.

The protein resides in the cytoplasm. Functionally, exhibits a very high intrinsic GTPase hydrolysis rate. Involved in the addition of a carboxymethylaminomethyl (cmnm) group at the wobble position (U34) of certain tRNAs, forming tRNA-cmnm(5)s(2)U34. This chain is tRNA modification GTPase MnmE, found in Staphylococcus aureus (strain Mu3 / ATCC 700698).